Consider the following 773-residue polypeptide: E3 ubiquitin-protein ligase RFWD3 (773 aa).

Disordered stretches follow at residues 18-67 (VAEQ…SQVG), 92-117 (RVEN…IPVS), 139-230 (LRPP…EEVV), and 259-279 (GETL…SVSK). Ser-47 is subject to Phosphoserine; by ATM and ATR. Residues 50–59 (APPLLQPAPA) are compositionally biased toward low complexity. Ser-64 bears the Phosphoserine; by ATM and ATR mark. The segment covering 151-164 (RSRRRRGSASRRSR) has biased composition (basic residues). Over residues 186-205 (VSRTQPHLPSMSQDSETRNP) the composition is skewed to polar residues. A compositionally biased stretch (low complexity) spans 207–221 (SEDLQVSSSSSSDSE). Polar residues predominate over residues 263–273 (PKQSPQKTNPL). An RING-type; degenerate zinc finger spans residues 287-331 (CTICFEHWTNAGDHRLSALRCGHLFGYKCISKWLKGQARKCPQCN). Residues 361–403 (SLLKEQMLRKQAELESAQCRLQLQVLTDECSKLHSRVQDLQKL) adopt a coiled-coil conformation. 3 WD repeats span residues 494–536 (MHGK…QTYN), 538–576 (GRPV…SHIQ), and 582–627 (KARC…SHWP).

Interacts with MDM2 and p53/TP53. Binds to the RPA complex via direct interaction with RPA2. Interacts with RAD51. Post-translationally, phosphorylated at Ser-46 and Ser-63 upon DNA damage by ATM or ATR. ATM phosphorylation occurs at early times upon DNA damage, while ATR is the major kinase at later times. Phosphorylation by ATM and ATR is required to stabilize p53/TP53. Part of the phosphorylation depends upon RPA2 presence.

It localises to the nucleus. The protein resides in the PML body. It is found in the cytoplasm. It carries out the reaction S-ubiquitinyl-[E2 ubiquitin-conjugating enzyme]-L-cysteine + [acceptor protein]-L-lysine = [E2 ubiquitin-conjugating enzyme]-L-cysteine + N(6)-ubiquitinyl-[acceptor protein]-L-lysine.. It functions in the pathway protein modification; protein ubiquitination. Functionally, E3 ubiquitin-protein ligase required for the repair of DNA interstrand cross-links (ICL) in response to DNA damage. Plays a key role in RPA-mediated DNA damage signaling and repair. Acts by mediating ubiquitination of the RPA complex (RPA1, RPA2 and RPA3 subunits) and RAD51 at stalled replication forks, leading to remove them from DNA damage sites and promote homologous recombination. Also mediates the ubiquitination of p53/TP53 in the late response to DNA damage, and acts as a positive regulator of p53/TP53 stability, thereby regulating the G1/S DNA damage checkpoint. May act by catalyzing the formation of short polyubiquitin chains on p53/TP53 that are not targeted to the proteasome. In response to ionizing radiation, interacts with MDM2 and enhances p53/TP53 ubiquitination, possibly by restricting MDM2 from extending polyubiquitin chains on ubiquitinated p53/TP53. Required to translesion DNA synthesis across DNA-protein cross-link adducts by catalyzing ubiquitination of proteins on single-stranded DNA (ssDNA). This Ailuropoda melanoleuca (Giant panda) protein is E3 ubiquitin-protein ligase RFWD3 (RFWD3).